The chain runs to 28 residues: Fibrinogen alpha chain (28 aa).

Residue serine 3 is modified to Phosphoserine.

Heterohexamer; disulfide linked. Contains 2 sets of 3 non-identical chains (alpha, beta and gamma). The 2 heterotrimers are in head to head conformation with the N-termini in a small central domain. Conversion of fibrinogen to fibrin is triggered by thrombin, which cleaves fibrinopeptides A and B from alpha and beta chains, and thus exposes the N-terminal polymerization sites responsible for the formation of the soft clot. The soft clot is converted into the hard clot by factor XIIIA which catalyzes the epsilon-(gamma-glutamyl)lysine cross-linking between gamma chains (stronger) and between alpha chains (weaker) of different monomers. In terms of processing, forms F13A-mediated cross-links between a glutamine and the epsilon-amino group of a lysine residue, forming fibronectin-fibrinogen heteropolymers.

Its subcellular location is the secreted. Functionally, cleaved by the protease thrombin to yield monomers which, together with fibrinogen beta (FGB) and fibrinogen gamma (FGG), polymerize to form an insoluble fibrin matrix. Fibrin has a major function in hemostasis as one of the primary components of blood clots. In addition, functions during the early stages of wound repair to stabilize the lesion and guide cell migration during re-epithelialization. Was originally thought to be essential for platelet aggregation, based on in vitro studies using anticoagulated blood. However, subsequent studies have shown that it is not absolutely required for thrombus formation in vivo. Enhances expression of SELP in activated platelets via an ITGB3-dependent pathway. Maternal fibrinogen is essential for successful pregnancy. Fibrin deposition is also associated with infection, where it protects against IFNG-mediated hemorrhage. May also facilitate the immune response via both innate and T-cell mediated pathways. This Canis lupus familiaris (Dog) protein is Fibrinogen alpha chain (FGA).